The following is a 225-amino-acid chain: Venom allergen 5 (225 aa).

The N-terminal stretch at 1 to 23 (MKISGFVYLILITTIINLSFSEA) is a signal peptide. Cystine bridges form between Cys-27/Cys-39, Cys-31/Cys-124, Cys-49/Cys-117, and Cys-191/Cys-208. The SCP domain maps to 69–210 (KQHNEFRQKV…WHRHYLVCNY (142 aa)).

It belongs to the CRISP family. Venom allergen 5-like subfamily. Expressed by the venom gland.

It localises to the secreted. This Vespa magnifica (Hornet) protein is Venom allergen 5.